A 1050-amino-acid chain; its full sequence is NAD-specific glutamate dehydrogenase (1050 aa).

The tract at residues 1 to 39 is disordered; that stretch reads MDSPSAPVPAHKLVDRLKDQTPRHPSPQPTHVSYPKVNG. Residues 12–22 are compositionally biased toward basic and acidic residues; the sequence is KLVDRLKDQTP. Lys594 is an active-site residue.

It belongs to the Glu/Leu/Phe/Val dehydrogenases family. In terms of assembly, homotetramer.

The catalysed reaction is L-glutamate + NAD(+) + H2O = 2-oxoglutarate + NH4(+) + NADH + H(+). The sequence is that of NAD-specific glutamate dehydrogenase (gdh-1) from Neurospora crassa (strain ATCC 24698 / 74-OR23-1A / CBS 708.71 / DSM 1257 / FGSC 987).